A 67-amino-acid polypeptide reads, in one-letter code: Small ribosomal subunit protein eS17 (67 aa).

It belongs to the eukaryotic ribosomal protein eS17 family.

The polypeptide is Small ribosomal subunit protein eS17 (Thermococcus onnurineus (strain NA1)).